The chain runs to 250 residues: Kallikrein-14 (250 aa).

The N-terminal stretch at 1–18 (MFLLLIILQALAVAIAQS) is a signal peptide. Positions 19–23 (QGDHK) are cleaved as a propeptide — activation peptide. The region spanning 24–248 (IIGGYRCVRN…YHSWIQRTMQ (225 aa)) is the Peptidase S1 domain. The cysteines at positions 51 and 67 are disulfide-linked. Active-site charge relay system residues include His-66 and Asp-110. 3 disulfides stabilise this stretch: Cys-142/Cys-209, Cys-174/Cys-188, and Cys-199/Cys-224. Catalysis depends on Ser-203, which acts as the Charge relay system.

It belongs to the peptidase S1 family. Kallikrein subfamily. In terms of processing, proteolytic cleavage of the activation peptide produces the active enzyme.

The protein localises to the secreted. Its subcellular location is the extracellular space. With respect to regulation, inhibited by SERPINA1, SERPINC1, SERPINE1, SERPINF2, aprotinin, soybean, trypsin inhibitor and leupeptin. Inhibited by serine protease inhibitor SPINK5. Has an autoproteolytic activity which may have a regulatory effect. Activated by citrate and inhibited by zinc and to a lower extent by manganese. Its function is as follows. Serine-type endopeptidase with a dual trypsin-like and chymotrypsin-like substrate specificity. May activate/inactivate the proteinase-activated receptors F2R, F2RL1 and F2RL3 and other kallikreins including KLK1, KLK3, KLK5 and KLK11. May function in seminal clot liquefaction through direct cleavage of the semenogelin SEMG1 and SEMG2 and activation of KLK3. May function through desmoglein DSG1 cleavage in epidermal desquamation a process by which the most superficial corneocytes are shed from the skin surface. May be involved in several aspects of tumor progression including growth, invasion and angiogenesis. This Mus musculus (Mouse) protein is Kallikrein-14 (Klk14).